Reading from the N-terminus, the 404-residue chain is Cysteine desulfurase IscS (404 aa).

Residues 75 to 76 (AT), N155, Q183, and 203 to 205 (SAH) each bind pyridoxal 5'-phosphate. K206 carries the N6-(pyridoxal phosphate)lysine modification. T243 contributes to the pyridoxal 5'-phosphate binding site. The Cysteine persulfide intermediate role is filled by C328. C328 serves as a coordination point for [2Fe-2S] cluster.

It belongs to the class-V pyridoxal-phosphate-dependent aminotransferase family. NifS/IscS subfamily. In terms of assembly, homodimer. Forms a heterotetramer with IscU, interacts with other sulfur acceptors. It depends on pyridoxal 5'-phosphate as a cofactor.

Its subcellular location is the cytoplasm. The enzyme catalyses (sulfur carrier)-H + L-cysteine = (sulfur carrier)-SH + L-alanine. Its pathway is cofactor biosynthesis; iron-sulfur cluster biosynthesis. Functionally, master enzyme that delivers sulfur to a number of partners involved in Fe-S cluster assembly, tRNA modification or cofactor biosynthesis. Catalyzes the removal of elemental sulfur atoms from cysteine to produce alanine. Functions as a sulfur delivery protein for Fe-S cluster synthesis onto IscU, an Fe-S scaffold assembly protein, as well as other S acceptor proteins. This Shewanella piezotolerans (strain WP3 / JCM 13877) protein is Cysteine desulfurase IscS.